An 892-amino-acid chain; its full sequence is Putative leucine-rich repeat receptor-like serine/threonine-protein kinase At2g04300 (892 aa).

The first 26 residues, 1-26 (MKTHPQAILLCVLFFITFGLLHVVEA), serve as a signal peptide directing secretion. Topologically, residues 27–523 (GNQEGFISLD…GAKKKNVVVL (497 aa)) are extracellular. N-linked (GlcNAc...) asparagine glycans are attached at residues Asn99, Asn186, Asn241, Asn267, and Asn294. LRR repeat units follow at residues 375–396 (IKNIQNTYGVSKTSWQGDPCVP), 399–422 (FMWDGLNCNNSYISTPPTITFLNL), 423–444 (SSSHLTGIIASAIQNLTHLQNL), and 447–467 (SNNNLTGGVPEFLAGLKSLLV). Residues Asn407, Asn421, Asn437, Asn450, and Asn469 are each glycosylated (N-linked (GlcNAc...) asparagine). Residues 524–544 (VVVSIALVVVLGSALALFLVF) form a helical membrane-spanning segment. Residues 545-892 (RKRKTPRNEV…FGTEYTPEAR (348 aa)) lie on the Cytoplasmic side of the membrane. Thr573 carries the phosphothreonine modification. The Protein kinase domain maps to 582-855 (NNFEKILGKG…QVVIELNECL (274 aa)). ATP is bound by residues 588–596 (LGKGGFGMV) and Lys610. Position 655 is a phosphotyrosine (Tyr655). The active-site Proton acceptor is Asp707. Phosphothreonine is present on residues Thr742 and Thr747. Tyr755 bears the Phosphotyrosine mark.

This sequence belongs to the protein kinase superfamily. Ser/Thr protein kinase family.

Its subcellular location is the cell membrane. The catalysed reaction is L-seryl-[protein] + ATP = O-phospho-L-seryl-[protein] + ADP + H(+). The enzyme catalyses L-threonyl-[protein] + ATP = O-phospho-L-threonyl-[protein] + ADP + H(+). The polypeptide is Putative leucine-rich repeat receptor-like serine/threonine-protein kinase At2g04300 (Arabidopsis thaliana (Mouse-ear cress)).